The chain runs to 102 residues: Large ribosomal subunit protein bL21 (102 aa).

The protein belongs to the bacterial ribosomal protein bL21 family. In terms of assembly, part of the 50S ribosomal subunit. Contacts protein L20.

In terms of biological role, this protein binds to 23S rRNA in the presence of protein L20. The chain is Large ribosomal subunit protein bL21 from Syntrophotalea carbinolica (strain DSM 2380 / NBRC 103641 / GraBd1) (Pelobacter carbinolicus).